The chain runs to 139 residues: ATP synthase epsilon chain (139 aa).

Belongs to the ATPase epsilon chain family. F-type ATPases have 2 components, CF(1) - the catalytic core - and CF(0) - the membrane proton channel. CF(1) has five subunits: alpha(3), beta(3), gamma(1), delta(1), epsilon(1). CF(0) has three main subunits: a, b and c.

It is found in the cell inner membrane. In terms of biological role, produces ATP from ADP in the presence of a proton gradient across the membrane. The protein is ATP synthase epsilon chain of Nitrosospira multiformis (strain ATCC 25196 / NCIMB 11849 / C 71).